The primary structure comprises 434 residues: 3-phosphoshikimate 1-carboxyvinyltransferase (434 aa).

Lys-22, Ser-23, and Arg-27 together coordinate 3-phosphoshikimate. Lys-22 contributes to the phosphoenolpyruvate binding site. Phosphoenolpyruvate contacts are provided by Gly-94 and Arg-122. The 3-phosphoshikimate site is built by Ser-169, Ser-170, Gln-171, Ser-199, Asp-320, and Lys-347. A phosphoenolpyruvate-binding site is contributed by Gln-171. Asp-320 functions as the Proton acceptor in the catalytic mechanism. The phosphoenolpyruvate site is built by Arg-351, Arg-395, and Lys-420.

This sequence belongs to the EPSP synthase family. As to quaternary structure, monomer.

The protein localises to the cytoplasm. It carries out the reaction 3-phosphoshikimate + phosphoenolpyruvate = 5-O-(1-carboxyvinyl)-3-phosphoshikimate + phosphate. It participates in metabolic intermediate biosynthesis; chorismate biosynthesis; chorismate from D-erythrose 4-phosphate and phosphoenolpyruvate: step 6/7. Functionally, catalyzes the transfer of the enolpyruvyl moiety of phosphoenolpyruvate (PEP) to the 5-hydroxyl of shikimate-3-phosphate (S3P) to produce enolpyruvyl shikimate-3-phosphate and inorganic phosphate. The polypeptide is 3-phosphoshikimate 1-carboxyvinyltransferase (Ralstonia pickettii (strain 12J)).